The chain runs to 410 residues: LL-diaminopimelate aminotransferase (410 aa).

Positions 15 and 42 each coordinate substrate. Residues Y72, 108–109 (AK), Y132, N188, Y219, and 247–249 (SFS) each bind pyridoxal 5'-phosphate. 3 residues coordinate substrate: K109, Y132, and N188. N6-(pyridoxal phosphate)lysine is present on K250. Residues R258 and N293 each contribute to the pyridoxal 5'-phosphate site. Positions 293 and 389 each coordinate substrate.

Belongs to the class-I pyridoxal-phosphate-dependent aminotransferase family. LL-diaminopimelate aminotransferase subfamily. As to quaternary structure, homodimer. Pyridoxal 5'-phosphate is required as a cofactor.

The enzyme catalyses (2S,6S)-2,6-diaminopimelate + 2-oxoglutarate = (S)-2,3,4,5-tetrahydrodipicolinate + L-glutamate + H2O + H(+). Its pathway is amino-acid biosynthesis; L-lysine biosynthesis via DAP pathway; LL-2,6-diaminopimelate from (S)-tetrahydrodipicolinate (aminotransferase route): step 1/1. Involved in the synthesis of meso-diaminopimelate (m-DAP or DL-DAP), required for both lysine and peptidoglycan biosynthesis. Catalyzes the direct conversion of tetrahydrodipicolinate to LL-diaminopimelate. This chain is LL-diaminopimelate aminotransferase, found in Bacteroides thetaiotaomicron (strain ATCC 29148 / DSM 2079 / JCM 5827 / CCUG 10774 / NCTC 10582 / VPI-5482 / E50).